We begin with the raw amino-acid sequence, 62 residues long: MRQLPGKAAKETRKMKRERKQQNKEGHNRVVTVAIPVCLAVFVMLIVYVYSATSKHRKWARR.

The segment at methionine 1 to histidine 27 is disordered. Residues alanine 9–valine 31 are a coiled coil. The helical transmembrane segment at valine 30–tyrosine 50 threads the bilayer.

It belongs to the SMCO4 family.

The protein resides in the membrane. In Nematostella vectensis (Starlet sea anemone), this protein is Single-pass membrane and coiled-coil domain-containing protein 4 homolog.